The primary structure comprises 115 residues: NADH-ubiquinone oxidoreductase chain 3 (115 aa).

A run of 3 helical transmembrane segments spans residues L3–W23, F55–L75, and L84–Y104.

Belongs to the complex I subunit 3 family. Core subunit of respiratory chain NADH dehydrogenase (Complex I) which is composed of 45 different subunits. Interacts with TMEM186. Interacts with TMEM242.

It is found in the mitochondrion inner membrane. The catalysed reaction is a ubiquinone + NADH + 5 H(+)(in) = a ubiquinol + NAD(+) + 4 H(+)(out). Its function is as follows. Core subunit of the mitochondrial membrane respiratory chain NADH dehydrogenase (Complex I) which catalyzes electron transfer from NADH through the respiratory chain, using ubiquinone as an electron acceptor. Essential for the catalytic activity of complex I. In Balaenoptera musculus (Blue whale), this protein is NADH-ubiquinone oxidoreductase chain 3.